Consider the following 243-residue polypeptide: Peptidase E (243 aa).

Catalysis depends on charge relay system residues Ser118, Asp133, and His155.

Belongs to the peptidase S51 family.

It localises to the cytoplasm. The catalysed reaction is Dipeptidase E catalyzes the hydrolysis of dipeptides Asp-|-Xaa. It does not act on peptides with N-terminal Glu, Asn or Gln, nor does it cleave isoaspartyl peptides.. Hydrolyzes dipeptides containing N-terminal aspartate residues. May play a role in allowing the cell to use peptide aspartate to spare carbon otherwise required for the synthesis of the aspartate family of amino acids. The chain is Peptidase E from Streptomyces coelicolor (strain ATCC BAA-471 / A3(2) / M145).